The primary structure comprises 157 residues: Probable succinate transporter subunit YjjB (157 aa).

5 helical membrane passes run 8 to 28, 34 to 54, 55 to 75, 87 to 107, and 129 to 149; these read LALM…AMVF, ALPW…LMMS, AGFN…SIGI, VFTV…TAMI, and FLKA…PGLW.

The protein belongs to the ThrE exporter (TC 2.A.79) family. In terms of assembly, the transporter is composed of YjjB and YjjP.

It localises to the cell inner membrane. Involved in succinate export with YjjP. Both proteins are required for export. The protein is Probable succinate transporter subunit YjjB of Salmonella typhi.